We begin with the raw amino-acid sequence, 102 residues long: Small ribosomal subunit protein uS10 (102 aa).

This sequence belongs to the universal ribosomal protein uS10 family. Part of the 30S ribosomal subunit.

Functionally, involved in the binding of tRNA to the ribosomes. In Clostridium acetobutylicum (strain ATCC 824 / DSM 792 / JCM 1419 / IAM 19013 / LMG 5710 / NBRC 13948 / NRRL B-527 / VKM B-1787 / 2291 / W), this protein is Small ribosomal subunit protein uS10.